The chain runs to 103 residues: Co-chaperonin GroES (103 aa).

The protein belongs to the GroES chaperonin family. As to quaternary structure, heptamer of 7 subunits arranged in a ring. Interacts with the chaperonin GroEL.

The protein resides in the cytoplasm. Its function is as follows. Together with the chaperonin GroEL, plays an essential role in assisting protein folding. The GroEL-GroES system forms a nano-cage that allows encapsulation of the non-native substrate proteins and provides a physical environment optimized to promote and accelerate protein folding. GroES binds to the apical surface of the GroEL ring, thereby capping the opening of the GroEL channel. The polypeptide is Co-chaperonin GroES (Synechococcus elongatus (strain ATCC 33912 / PCC 7942 / FACHB-805) (Anacystis nidulans R2)).